Here is a 69-residue protein sequence, read N- to C-terminus: MILYPSVDDLLERVDSRYSLIMLASKRAHQLDEGQPELLDKYTSQKNVGKALEEVVAGDVIIDPNEKDL.

Belongs to the RNA polymerase subunit omega family. The RNAP catalytic core consists of 2 alpha, 1 beta, 1 beta' and 1 omega subunit. When a sigma factor is associated with the core the holoenzyme is formed, which can initiate transcription.

It carries out the reaction RNA(n) + a ribonucleoside 5'-triphosphate = RNA(n+1) + diphosphate. Promotes RNA polymerase assembly. Latches the N- and C-terminal regions of the beta' subunit thereby facilitating its interaction with the beta and alpha subunits. In Pediococcus pentosaceus (strain ATCC 25745 / CCUG 21536 / LMG 10740 / 183-1w), this protein is DNA-directed RNA polymerase subunit omega.